Reading from the N-terminus, the 201-residue chain is Probable quinol oxidase subunit 3 (201 aa).

5 helical membrane passes run 20–40 (LGFWIFITAEFALFGTLFATL), 62–82 (LVLIMTFALLFSSYTCGIAIY), 91–111 (LMMFWMIITLLLGLVFVGFEI), 133–153 (FFILLGTHGCHVSLGIVWAIC), and 172–192 (FIVSLYWHFLDVVWVFIFTAV).

It belongs to the cytochrome c oxidase subunit 3 family.

It localises to the cell membrane. It catalyses the reaction 2 a quinol + O2 = 2 a quinone + 2 H2O. In terms of biological role, catalyzes quinol oxidation with the concomitant reduction of oxygen to water. The protein is Probable quinol oxidase subunit 3 (qoxC) of Staphylococcus aureus (strain MSSA476).